We begin with the raw amino-acid sequence, 386 residues long: Alanine racemase (386 aa).

The Proton acceptor; specific for D-alanine role is filled by lysine 38. Position 38 is an N6-(pyridoxal phosphate)lysine (lysine 38). Residue arginine 136 coordinates substrate. The active-site Proton acceptor; specific for L-alanine is tyrosine 267. Substrate is bound at residue methionine 315.

Belongs to the alanine racemase family. Requires pyridoxal 5'-phosphate as cofactor.

The catalysed reaction is L-alanine = D-alanine. The protein operates within amino-acid biosynthesis; D-alanine biosynthesis; D-alanine from L-alanine: step 1/1. Catalyzes the interconversion of L-alanine and D-alanine. May also act on other amino acids. This chain is Alanine racemase (alr), found in Clostridium perfringens (strain SM101 / Type A).